Consider the following 581-residue polypeptide: Arginine--tRNA ligase (581 aa).

Positions 126–136 match the 'HIGH' region motif; that stretch reads PNLAKEMHVGH.

This sequence belongs to the class-I aminoacyl-tRNA synthetase family. As to quaternary structure, monomer.

It localises to the cytoplasm. It carries out the reaction tRNA(Arg) + L-arginine + ATP = L-arginyl-tRNA(Arg) + AMP + diphosphate. The polypeptide is Arginine--tRNA ligase (Shewanella denitrificans (strain OS217 / ATCC BAA-1090 / DSM 15013)).